The sequence spans 1194 residues: DNA polymerase catalytic subunit (1194 aa).

The protein belongs to the DNA polymerase type-B family. Forms a complex with the ssDNA-binding protein, the DNA polymerase processivity factor, and the alkaline exonuclease. Interacts with the helicase-primase complex composed of the primase, the helicase and the primase-associated factor; this interaction may coordinate leading and lagging strand DNA synthesis at the replication fork.

Its subcellular location is the host nucleus. It catalyses the reaction DNA(n) + a 2'-deoxyribonucleoside 5'-triphosphate = DNA(n+1) + diphosphate. The enzyme catalyses Endonucleolytic cleavage to 5'-phosphomonoester.. Its function is as follows. Replicates viral genomic DNA. The replication complex is composed of six viral proteins: the DNA polymerase, processivity factor, primase, primase-associated factor, helicase, and ssDNA-binding protein. Additionally, the polymerase contains an intrinsic ribonuclease H (RNase H) activity that specifically degrades RNA/DNA heteroduplexes or duplex DNA substrates in the 5' to 3' direction. Therefore, it can catalyze the excision of the RNA primers that initiate the synthesis of Okazaki fragments at a replication fork during viral DNA replication. The protein is DNA polymerase catalytic subunit of Varicella-zoster virus (strain Oka vaccine) (HHV-3).